We begin with the raw amino-acid sequence, 790 residues long: Probable phosphoketolase (790 aa).

Belongs to the XFP family. It depends on thiamine diphosphate as a cofactor.

The polypeptide is Probable phosphoketolase (Nitrosomonas europaea (strain ATCC 19718 / CIP 103999 / KCTC 2705 / NBRC 14298)).